The sequence spans 748 residues: Putative transmembrane protein ORF88 (748 aa).

A signal peptide spans 1 to 20; it reads MIIMKSIILLLAWFLTKTQA. Topologically, residues 21-723 are extracellular; it reads NMLTESLYLS…LNLAPFKTLS (703 aa). Residues N55, N78, N99, N152, N189, N390, N467, and N499 are each glycosylated (N-linked (GlcNAc...) asparagine; by host). Positions 531–574 are disordered; the sequence is LTFDSPPPPPTTTQAPPPPPTTTQAPPPPPTTTQAPPPPIVINT. Positions 535–570 are enriched in pro residues; that stretch reads SPPPPPTTTQAPPPPPTTTQAPPPPPTTTQAPPPPI. N-linked (GlcNAc...) asparagine; by host glycosylation is found at N573, N584, N599, N612, and N617. The disordered stretch occupies residues 650–680; the sequence is PSIGRAPIPPPDVPVEPPRSIPTTNAPSPEE. The span at 656 to 669 shows a compositional bias: pro residues; the sequence is PIPPPDVPVEPPRS. The chain crosses the membrane as a helical span at residues 724 to 744; that stretch reads YAGIGVVSFALLFTILVVCLI. Residues 745–748 lie on the Cytoplasmic side of the membrane; it reads KFSI.

It localises to the host membrane. This chain is Putative transmembrane protein ORF88, found in Magallana gigas (Pacific oyster).